The primary structure comprises 243 residues: Terpene cyclase dpasB (243 aa).

7 consecutive transmembrane segments (helical) span residues 16–36, 50–70, 79–99, 112–132, 141–161, 172–189, and 207–227; these read VVWVTDVCKLVMAVGWLSNYI, MALMPLCCNFAWEFTYFFIYP, IHTLAFLLNCGVMYTAVRYGA, LPVIFVVCIACWVSAHVAFAE, AVSGFACQILLSAGGTCQLLC, LWLARFMGSFALILPNML, and IWFLGMFLFLDGSYGFVLWYV.

This sequence belongs to the paxB family.

Its subcellular location is the membrane. It participates in secondary metabolite biosynthesis; terpenoid biosynthesis. In terms of biological role, terpene cyclase; part of the gene cluster that mediates the biosynthesis of the diterpenoid pyrones subglutinols A and B. The first step of the pathway is the synthesis of the alpha-pyrone moiety by the polyketide synthase dpasA via condensation of one acetyl-CoA starter unit with 3 malonyl-CoA units and 2 methylations. The alpha-pyrone is then combined with geranylgeranyl pyrophosphate (GGPP) formed by the GGPP synthase dpasD through the action of the prenyltransferase dpasC to yield a linear alpha-pyrone diterpenoid. Subsequent steps in the diterpenoid pyrone biosynthetic pathway involve the decalin core formation, which is initiated by the epoxidation of the C10-C11 olefin by the FAD-dependent oxidoreductase dpasE, and is followed by a cyclization cascade catalyzed by the terpene cyclase dpasB. The FAD-linked oxidoreductase dpasF is then involved in tetrahydrofuran (THF) ring formation at the C5 unit to complete the formation of subglutinols A and B. DpasF possesses also an additional catalytic ability of multi-step oxidations to generate a new DDP analog with an enone system at the C5 named FDDP A. This Apiospora sacchari (Arthrinium sacchari) protein is Terpene cyclase dpasB.